The chain runs to 64 residues: Small ribosomal subunit protein bS21 (64 aa).

It belongs to the bacterial ribosomal protein bS21 family.

The sequence is that of Small ribosomal subunit protein bS21 from Sulfurihydrogenibium sp. (strain YO3AOP1).